The primary structure comprises 75 residues: MNRLFLVLIFLYKKLLSPFLPPSCRFTPSCSEYAKQAFETYPWYKAFVLSVVRISKCHPYHEGGHDPLPKSYNKS.

Belongs to the UPF0161 family.

The protein localises to the cell inner membrane. In terms of biological role, could be involved in insertion of integral membrane proteins into the membrane. The polypeptide is Putative membrane protein insertion efficiency factor (Leptospira biflexa serovar Patoc (strain Patoc 1 / ATCC 23582 / Paris)).